The sequence spans 487 residues: Meiotic recombination protein SPO11-4 (487 aa).

The disordered stretch occupies residues 1-56; the sequence is MDDSTDDDSYHPRKHYAYDRQVSSSRWRTSREYIRGPGPETHTTESAQDGQDPPAG. Residues 119–252 enclose the Topo IIA-type catalytic domain; sequence KSRVEARKTL…LGIIAAEKGI (134 aa). The active-site O-(5'-phospho-DNA)-tyrosine intermediate is the Y213. Mg(2+)-binding residues include E301 and D353.

This sequence belongs to the TOP6A family. In terms of assembly, homodimer. Interacts with TOP6B. Mg(2+) is required as a cofactor.

It localises to the nucleus. The catalysed reaction is ATP-dependent breakage, passage and rejoining of double-stranded DNA.. Its function is as follows. Required for meiotic recombination. Mediates DNA cleavage that forms the double-strand breaks (DSB) that initiate meiotic recombination. Possesses double-stranded DNA cleavage activity in vitro. The polypeptide is Meiotic recombination protein SPO11-4 (SPO11-4) (Oryza sativa subsp. japonica (Rice)).